The chain runs to 305 residues: Protoheme IX farnesyltransferase 2 (305 aa).

The next 7 helical transmembrane spans lie at 38–58 (LITT…SFLG), 60–80 (LNTV…SCAV), 115–135 (ILLI…AAVI), 157–177 (INTV…WTAV), 181–201 (IGVV…PHFL), 236–256 (VACL…IVIL), and 285–305 (FVYS…FTLF).

It belongs to the UbiA prenyltransferase family. Protoheme IX farnesyltransferase subfamily. In terms of assembly, interacts with CtaA.

The protein localises to the cell membrane. The catalysed reaction is heme b + (2E,6E)-farnesyl diphosphate + H2O = Fe(II)-heme o + diphosphate. The protein operates within porphyrin-containing compound metabolism; heme O biosynthesis; heme O from protoheme: step 1/1. Its function is as follows. Converts heme B (protoheme IX) to heme O by substitution of the vinyl group on carbon 2 of heme B porphyrin ring with a hydroxyethyl farnesyl side group. This chain is Protoheme IX farnesyltransferase 2, found in Bacillus velezensis (strain DSM 23117 / BGSC 10A6 / LMG 26770 / FZB42) (Bacillus amyloliquefaciens subsp. plantarum).